The sequence spans 129 residues: Small ribosomal subunit protein uS11 (129 aa).

The protein belongs to the universal ribosomal protein uS11 family. In terms of assembly, part of the 30S ribosomal subunit. Interacts with proteins S7 and S18. Binds to IF-3.

Located on the platform of the 30S subunit, it bridges several disparate RNA helices of the 16S rRNA. Forms part of the Shine-Dalgarno cleft in the 70S ribosome. The protein is Small ribosomal subunit protein uS11 of Cereibacter sphaeroides (strain ATCC 17025 / ATH 2.4.3) (Rhodobacter sphaeroides).